The sequence spans 342 residues: Aspartate carbamoyltransferase catalytic subunit (342 aa).

Residues Arg-59 and Thr-60 each contribute to the carbamoyl phosphate site. Lys-87 contributes to the L-aspartate binding site. Carbamoyl phosphate is bound by residues Arg-109, His-142, and Gln-145. 2 residues coordinate L-aspartate: Arg-182 and Arg-253. Residues Gly-294 and Pro-295 each contribute to the carbamoyl phosphate site.

Belongs to the aspartate/ornithine carbamoyltransferase superfamily. ATCase family. As to quaternary structure, heterododecamer (2C3:3R2) of six catalytic PyrB chains organized as two trimers (C3), and six regulatory PyrI chains organized as three dimers (R2).

The catalysed reaction is carbamoyl phosphate + L-aspartate = N-carbamoyl-L-aspartate + phosphate + H(+). It participates in pyrimidine metabolism; UMP biosynthesis via de novo pathway; (S)-dihydroorotate from bicarbonate: step 2/3. Catalyzes the condensation of carbamoyl phosphate and aspartate to form carbamoyl aspartate and inorganic phosphate, the committed step in the de novo pyrimidine nucleotide biosynthesis pathway. The sequence is that of Aspartate carbamoyltransferase catalytic subunit from Synechococcus sp. (strain WH7803).